Here is a 259-residue protein sequence, read N- to C-terminus: Phosphoadenosine 5'-phosphosulfate reductase (259 aa).

C244 acts as the Nucleophile; cysteine thiosulfonate intermediate in catalysis.

This sequence belongs to the PAPS reductase family. CysH subfamily.

It is found in the cytoplasm. It catalyses the reaction [thioredoxin]-disulfide + sulfite + adenosine 3',5'-bisphosphate + 2 H(+) = [thioredoxin]-dithiol + 3'-phosphoadenylyl sulfate. It functions in the pathway sulfur metabolism; hydrogen sulfide biosynthesis; sulfite from sulfate: step 3/3. Its function is as follows. Catalyzes the formation of sulfite from phosphoadenosine 5'-phosphosulfate (PAPS) using thioredoxin as an electron donor. This is Phosphoadenosine 5'-phosphosulfate reductase from Vibrio parahaemolyticus serotype O3:K6 (strain RIMD 2210633).